Consider the following 484-residue polypeptide: Cathepsin F (484 aa).

Positions 1–19 (MAPWLQLLSLLGLLPGAVA) are cleaved as a signal peptide. Residues 20–270 (APAQPRAASF…MKQAKSVGDL (251 aa)) constitute a propeptide, activation peptide. Residues Asn-160 and Asn-195 are each glycosylated (N-linked (GlcNAc...) asparagine). Disulfide bonds link Cys-292–Cys-333 and Cys-326–Cys-366. Cys-295 is an active-site residue. N-linked (GlcNAc...) asparagine glycans are attached at residues Asn-367 and Asn-378. A disulfide bridge links Cys-424 with Cys-472. Residue His-431 is part of the active site. Asn-440 carries N-linked (GlcNAc...) asparagine glycosylation. The active site involves Asn-451.

Belongs to the peptidase C1 family. In terms of tissue distribution, high expression levels in heart, skeletal muscle, brain, testis and ovary; moderate levels in prostate, placenta, liver and colon; and no detectable expression in peripheral leukocytes and thymus.

It localises to the lysosome. It carries out the reaction The recombinant enzyme cleaves synthetic substrates with Phe and Leu (better than Val) in P2, with high specificity constant (kcat/Km) comparable to that of cathepsin L.. Functionally, thiol protease which is believed to participate in intracellular degradation and turnover of proteins. Has also been implicated in tumor invasion and metastasis. The chain is Cathepsin F (CTSF) from Homo sapiens (Human).